Consider the following 431-residue polypeptide: Enolase (431 aa).

Gln166 provides a ligand contact to (2R)-2-phosphoglycerate. The Proton donor role is filled by Glu208. Residues Asp245, Glu288, and Asp315 each contribute to the Mg(2+) site. Residues Lys340, Arg369, Ser370, and Lys391 each contribute to the (2R)-2-phosphoglycerate site. Lys340 (proton acceptor) is an active-site residue.

It belongs to the enolase family. Mg(2+) serves as cofactor.

It localises to the cytoplasm. Its subcellular location is the secreted. The protein localises to the cell surface. It catalyses the reaction (2R)-2-phosphoglycerate = phosphoenolpyruvate + H2O. It participates in carbohydrate degradation; glycolysis; pyruvate from D-glyceraldehyde 3-phosphate: step 4/5. Its function is as follows. Catalyzes the reversible conversion of 2-phosphoglycerate (2-PG) into phosphoenolpyruvate (PEP). It is essential for the degradation of carbohydrates via glycolysis. This Clostridium botulinum (strain Eklund 17B / Type B) protein is Enolase.